The following is a 395-amino-acid chain: Phosphoglycerate kinase (395 aa).

Substrate contacts are provided by residues 21–23, Arg-36, 59–62, Arg-114, and Arg-147; these read DLN and HLGR. ATP-binding positions include Lys-198, Glu-320, and 346–349; that span reads GGDT.

Belongs to the phosphoglycerate kinase family. Monomer.

The protein localises to the cytoplasm. The catalysed reaction is (2R)-3-phosphoglycerate + ATP = (2R)-3-phospho-glyceroyl phosphate + ADP. Its pathway is carbohydrate degradation; glycolysis; pyruvate from D-glyceraldehyde 3-phosphate: step 2/5. In Nitrosospira multiformis (strain ATCC 25196 / NCIMB 11849 / C 71), this protein is Phosphoglycerate kinase.